Reading from the N-terminus, the 352-residue chain is Endophilin-A1 (352 aa).

The interval 1 to 21 (MSVAGLKKQFHKATQKVSEKV) is membrane-binding amphipathic helix. A disordered region spans residues 1-27 (MSVAGLKKQFHKATQKVSEKVGGAEGT). Residues 1–125 (MSVAGLKKQF…EVGEAMRELS (125 aa)) form a binds and tubulates liposomes region. The 232-residue stretch at 18–249 (SEKVGGAEGT…LEERIRQASS (232 aa)) folds into the BAR domain. The segment at 60 to 87 (PNPASRAKLSMINTMSKIRGQEKGPGYP) is required for dimerization upon membrane association. Residues 181–248 (EELRQALEKF…RLEERIRQAS (68 aa)) adopt a coiled-coil conformation. Residues 245–257 (RQASSQPRREYQP) show a composition bias toward basic and acidic residues. Residues 245 to 289 (RQASSQPRREYQPKPRMSLEFPTGDSTQPNGGLSHTGTPKPSGVQ) form a disordered region. A Phosphoserine modification is found at Ser-262. Residues 268-283 (GDSTQPNGGLSHTGTP) show a composition bias toward polar residues. Residues 290–349 (MDQPCCRALYDFEPENEGELGFKEGDIITLTNQIDENWYEGMLHGHSGFFPINYVEILVA) enclose the SH3 domain. Tyr-299 carries the phosphotyrosine modification.

It belongs to the endophilin family. In terms of assembly, monomer; in cytoplasm. Homodimer; when associated with membranes. Interacts with OPHN1. Interacts with SYNJ1. Interacts with DNM1. Interacts with MAP4K3; the interaction appears to regulate MAP4K3-mediated JNK activation. Interacts with PDCD6IP. Interacts with ATXN2. Interacts with ADAM9 and ADAM15 cytoplasmic tails. Interacts with BIN2. Interacts with TMEM108. Interacts with ADGRB2. As to expression, brain, mostly in frontal cortex. Expressed at high level in fetal cerebellum.

It localises to the cytoplasm. It is found in the membrane. Its subcellular location is the early endosome. The protein resides in the presynapse. Functionally, implicated in synaptic vesicle endocytosis. May recruit other proteins to membranes with high curvature. Required for BDNF-dependent dendrite outgrowth. Cooperates with SH3GL2 to mediate BDNF-NTRK2 early endocytic trafficking and signaling from early endosomes. The polypeptide is Endophilin-A1 (SH3GL2) (Homo sapiens (Human)).